The primary structure comprises 1439 residues: Fanconi anemia group D2 protein (1439 aa).

Residue Lys563 forms a Glycyl lysine isopeptide (Lys-Gly) (interchain with G-Cter in ubiquitin) linkage.

It belongs to the Fanconi anemia protein FANCD2 family. Homodimer; cannot be ubiquitinated and does not bind DNA. Part of a FANCI-FANCD2 heterodimeric complex that binds and scans dsDNA for DNA damage. Interacts directly with FANCE and FANCI. Interacts with USP1 and MEN1. The ubiquitinated form specifically interacts with BRCA1 and BLM. Both the nonubiquitinated and the monoubiquitinated forms interact with BRCA2; this interaction is mediated by phosphorylated FANCG and the complex also includes XCCR3. The ubiquitinated form specifically interacts with MTMR15/FAN1 (via UBZ-type zinc finger), leading to recruit MTMR15/FAN1 to sites of DNA damage. Interacts with DCLRE1B/Apollo. Interacts with POLN. Interacts with UHRF1 and UHRF2; these interactions promote FANCD2 activation. In terms of processing, monoubiquitinated on Lys-563 during S phase and upon genotoxic stress. Deubiquitinated by USP1 as cells enter G2/M, or once DNA repair is completed. Monoubiquitination prevents DNA release from the FANCI-FANCD2 complex. FANCD2 is only ubiquitinated in the FANCI-FANCD2 complex and the monoubiquitination of FANCD2 is promoted by phosphorylation of FANCI. Phosphorylated in response to various genotoxic stresses by ATM and/or ATR.

It is found in the nucleus. Required for maintenance of chromosomal stability. Promotes accurate and efficient pairing of homologs during meiosis. Involved in the repair of DNA double-strand breaks, both by homologous recombination and single-strand annealing. The FANCI-FANCD2 complex binds and scans double-stranded DNA (dsDNA) for DNA damage; this complex stalls at DNA junctions between double-stranded DNA and single-stranded DNA. May participate in S phase and G2 phase checkpoint activation upon DNA damage. Plays a role in preventing breakage and loss of missegregating chromatin at the end of cell division, particularly after replication stress. Required for the targeting, or stabilization, of BLM to non-centromeric abnormal structures induced by replicative stress. Promotes BRCA2/FANCD1 loading onto damaged chromatin. May also be involved in B-cell immunoglobulin isotype switching. The protein is Fanconi anemia group D2 protein of Gallus gallus (Chicken).